Here is a 531-residue protein sequence, read N- to C-terminus: T-complex protein 1 subunit zeta-2 (531 aa).

Belongs to the TCP-1 chaperonin family. In terms of assembly, component of the chaperonin-containing T-complex (TRiC), a heterooligomeric complex of about 850 to 900 kDa that forms two stacked rings, 12 to 16 nm in diameter.

It is found in the cytoplasm. Component of the chaperonin-containing T-complex (TRiC), a molecular chaperone complex that assists the folding of proteins upon ATP hydrolysis. This chain is T-complex protein 1 subunit zeta-2 (CCT6B), found in Bos taurus (Bovine).